Reading from the N-terminus, the 176-residue chain is Zinc finger A20 and AN1 domain-containing stress-associated protein 9 (176 aa).

The A20-type zinc finger occupies 16–50 (ASEPKLCVKGCGFFGSPSNMDLCSKCYRGICAEEA). Positions 22, 26, 38, 41, 117, 120, 131, 133, 138, 141, 147, and 149 each coordinate Zn(2+). An AN1-type zinc finger spans residues 111–157 (PARTNRCLCCNKKVGIMGFKCKCGSTFCGEHRYPETHDCSFDFKEVG).

In terms of biological role, may be involved in environmental stress response. In Arabidopsis thaliana (Mouse-ear cress), this protein is Zinc finger A20 and AN1 domain-containing stress-associated protein 9 (SAP9).